The chain runs to 395 residues: Elongation factor Tu (395 aa).

Residues lysine 10 to arginine 205 enclose the tr-type G domain. Positions glycine 19–threonine 26 are G1. Glycine 19–threonine 26 lines the GTP pocket. Mg(2+) is bound at residue threonine 26. Positions glycine 60 to asparagine 64 are G2. The tract at residues aspartate 81–glycine 84 is G3. GTP is bound by residues aspartate 81–histidine 85 and asparagine 136–aspartate 139. A G4 region spans residues asparagine 136–aspartate 139. Positions serine 174–leucine 176 are G5.

It belongs to the TRAFAC class translation factor GTPase superfamily. Classic translation factor GTPase family. EF-Tu/EF-1A subfamily. In terms of assembly, monomer.

It localises to the cytoplasm. It carries out the reaction GTP + H2O = GDP + phosphate + H(+). Functionally, GTP hydrolase that promotes the GTP-dependent binding of aminoacyl-tRNA to the A-site of ribosomes during protein biosynthesis. The chain is Elongation factor Tu from Parabacteroides distasonis (strain ATCC 8503 / DSM 20701 / CIP 104284 / JCM 5825 / NCTC 11152).